The sequence spans 840 residues: Heat shock 70 kDa protein 4 (840 aa).

Position 53 is an N6-acetyllysine (lysine 53). Residue serine 76 is modified to Phosphoserine. Phosphotyrosine occurs at positions 89 and 336. A phosphoserine mark is found at serine 393 and serine 415. Lysine 430 is modified (N6-acetyllysine). The tract at residues 500 to 575 (VHKSEENEEP…QAKKAKVKTS (76 aa)) is disordered. Basic and acidic residues predominate over residues 514–533 (QNAKEEEKMQVDQEEPHVEE). The residue at position 538 (threonine 538) is a Phosphothreonine. 2 positions are modified to phosphoserine: serine 546 and serine 647. Residue tyrosine 660 is modified to Phosphotyrosine. Position 679 is an N6-acetyllysine (lysine 679). Residue serine 756 is modified to Phosphoserine. An N6-methyllysine modification is found at lysine 773. Residues 779 to 840 (CSPIISKPKP…DKKLPEMDID (62 aa)) form a disordered region. Basic and acidic residues-rich tracts occupy residues 788 to 799 (PKVEPPKEEQKN) and 829 to 840 (DSDKKLPEMDID).

The protein belongs to the heat shock protein 70 family. As to quaternary structure, interacts with TJP1/ZO-1.

It localises to the cytoplasm. The protein is Heat shock 70 kDa protein 4 (HSPA4) of Homo sapiens (Human).